Here is a 411-residue protein sequence, read N- to C-terminus: Argininosuccinate synthase (411 aa).

ATP is bound by residues A15–S23 and A42. 2 residues coordinate L-citrulline: Y93 and S98. G123 provides a ligand contact to ATP. Residues T125, N129, and D130 each contribute to the L-aspartate site. N129 serves as a coordination point for L-citrulline. Positions 133, 185, 194, 270, and 282 each coordinate L-citrulline.

Belongs to the argininosuccinate synthase family. Type 1 subfamily. Homotetramer.

It localises to the cytoplasm. It carries out the reaction L-citrulline + L-aspartate + ATP = 2-(N(omega)-L-arginino)succinate + AMP + diphosphate + H(+). It functions in the pathway amino-acid biosynthesis; L-arginine biosynthesis; L-arginine from L-ornithine and carbamoyl phosphate: step 2/3. The polypeptide is Argininosuccinate synthase (Psychrobacter sp. (strain PRwf-1)).